Here is a 147-residue protein sequence, read N- to C-terminus: Small ribosomal subunit protein uS5 (147 aa).

One can recognise an S5 DRBM domain in the interval 9 to 72 (FEEVIVDIGR…DDAFKNIIHV (64 aa)).

The protein belongs to the universal ribosomal protein uS5 family. In terms of assembly, part of the 30S ribosomal subunit. Contacts proteins S4 and S8.

With S4 and S12 plays an important role in translational accuracy. Its function is as follows. Located at the back of the 30S subunit body where it stabilizes the conformation of the head with respect to the body. The polypeptide is Small ribosomal subunit protein uS5 (Campylobacter curvus (strain 525.92)).